An 895-amino-acid chain; its full sequence is ABC-transporter-regulating transcription factor (895 aa).

The zn(2)-C6 fungal-type DNA-binding region spans 69-96; it reads CDMCRKKKIKCDGKMPKCSHCTNYKTDC. A disordered region spans residues 156-218; the sequence is HASGSNTPHN…QKESETEVEG (63 aa). Over residues 158–207 the composition is skewed to polar residues; it reads SGSNTPHNPQKINIPSQSQIAMSQQNSSSHYSTPRLESQSSPRTAATSPE. A helical transmembrane segment spans residues 648–668; that stretch reads CVWLILYYPVSALVTLFANIL. Residues 726 to 813 form a disordered region; sequence ESYSKKKRKS…TGVSTNIPPN (88 aa). Low complexity predominate over residues 755 to 765; that stretch reads PSTTQPTQAPS.

In terms of assembly, interacts with ncaA.

Its subcellular location is the nucleus. It is found in the membrane. Functionally, transcription factor that regulates expression of the genes related to ergosterol biosynthesis, including erg3B, erg24A, erg25A, as well as cyp51A that encodes a target protein of azoles. In coordination with ffmA and ncaA, is responsible for the expression of the ABC transporter abcC/cdr1B/abcG1 related to azole resistance. Directly binds both the cyp51A and abcC/cdr1B/abcG1 promoters at a conserved 34 bp region called the atrR response element (ATRE). AtrR also binds to the promoter regions of both the sterol response transcription factor srbA and atrR genes themselves, the latter suggesting the possibility that atrR is autoregulated. Also regulates iron uptake, most likely via cooperation with SrbA. AtrR is necessary for hypoxia adaptation and virulence. The protein is ABC-transporter-regulating transcription factor of Aspergillus fumigatus (strain ATCC MYA-4609 / CBS 101355 / FGSC A1100 / Af293) (Neosartorya fumigata).